A 467-amino-acid polypeptide reads, in one-letter code: MSAPPAPPPDRSAPPDRTDSAQTEPTRPLVRRARRARMWLEPGLGVKRWIFLFVVCTFVGAVAFLHFTWTGPLHPLATKWILWLNQFAEPGVFPLYAVGMVVMALALAGALYSITMISRAMLRGTGTAPETAVNVLYERKTLSRGMRVVTVGGGTGLSNLLTGLKTHSSNITAVVTVADDGGSSGRLREALDMVAPGDLTDCYAALSESPALARLLLHRFGRGEGLEGHTFGNLLLATLSEERGGLGTAMQDIHEILKVRGRVYPATTRPVTLVAELADGRTIRGESRFAEQIRPSRIERVRLEPENPSALTQVLEAVRDAEMIVLGPGSLFTSIIPALLIPDIARAVRESPAPVVYVASLMTEPGETDGLSLSDHVNAITRHLGRTPDWVLLSNSKIEPAVQRRYQQEGATVLTLDGAGRDLRGRVRFAPLIQAGTARHDPQKLAAALMQLWDGPPRRFSLPGQRD.

The span at 1–12 (MSAPPAPPPDRS) shows a compositional bias: pro residues. The disordered stretch occupies residues 1–27 (MSAPPAPPPDRSAPPDRTDSAQTEPTR).

This sequence belongs to the gluconeogenesis factor family.

It localises to the cytoplasm. Its function is as follows. Required for morphogenesis under gluconeogenic growth conditions. The polypeptide is Putative gluconeogenesis factor (Deinococcus radiodurans (strain ATCC 13939 / DSM 20539 / JCM 16871 / CCUG 27074 / LMG 4051 / NBRC 15346 / NCIMB 9279 / VKM B-1422 / R1)).